The sequence spans 278 residues: NAD-capped RNA hydrolase NudC (278 aa).

R84 contributes to the substrate binding site. 2 residues coordinate Zn(2+): C114 and C117. Residue E127 coordinates substrate. C132 is a Zn(2+) binding site. Y140 lines the substrate pocket. The 124-residue stretch at 141–264 (PRISPSMIVL…SIARYLIEAY (124 aa)) folds into the Nudix hydrolase domain. A174, E190, and E194 together coordinate a divalent metal cation. The Nudix box signature appears at 175–196 (GFVEPGESAEDCVHREVMEEVQ). 208–215 (QCWPFPHS) contributes to the substrate binding site. E235 contributes to the a divalent metal cation binding site. A257 lines the substrate pocket.

Belongs to the Nudix hydrolase family. NudC subfamily. As to quaternary structure, homodimer. The cofactor is Mg(2+). Requires Mn(2+) as cofactor. Zn(2+) serves as cofactor.

The catalysed reaction is a 5'-end NAD(+)-phospho-ribonucleoside in mRNA + H2O = a 5'-end phospho-adenosine-phospho-ribonucleoside in mRNA + beta-nicotinamide D-ribonucleotide + 2 H(+). The enzyme catalyses NAD(+) + H2O = beta-nicotinamide D-ribonucleotide + AMP + 2 H(+). It carries out the reaction NADH + H2O = reduced beta-nicotinamide D-ribonucleotide + AMP + 2 H(+). MRNA decapping enzyme that specifically removes the nicotinamide adenine dinucleotide (NAD) cap from a subset of mRNAs by hydrolyzing the diphosphate linkage to produce nicotinamide mononucleotide (NMN) and 5' monophosphate mRNA. The NAD-cap is present at the 5'-end of some mRNAs and stabilizes RNA against 5'-processing. Has preference for mRNAs with a 5'-end purine. Catalyzes the hydrolysis of a broad range of dinucleotide pyrophosphates. In Pseudomonas syringae pv. syringae (strain B728a), this protein is NAD-capped RNA hydrolase NudC.